A 320-amino-acid chain; its full sequence is tRNA dimethylallyltransferase (320 aa).

ATP is bound at residue 17-24; the sequence is GPTASGKT. Substrate is bound at residue 19–24; sequence TASGKT. 3 interaction with substrate tRNA regions span residues 42–45, 166–170, and 249–254; these read DSAL, QRIQR, and RCVGYR.

This sequence belongs to the IPP transferase family. As to quaternary structure, monomer. Requires Mg(2+) as cofactor.

It catalyses the reaction adenosine(37) in tRNA + dimethylallyl diphosphate = N(6)-dimethylallyladenosine(37) in tRNA + diphosphate. Functionally, catalyzes the transfer of a dimethylallyl group onto the adenine at position 37 in tRNAs that read codons beginning with uridine, leading to the formation of N6-(dimethylallyl)adenosine (i(6)A). This Herminiimonas arsenicoxydans protein is tRNA dimethylallyltransferase.